The sequence spans 388 residues: Chaperone protein DnaJ (388 aa).

The region spanning 4-69 (DYYDILGVDE…EKRQRYDQFG (66 aa)) is the J domain. 3 stretches are compositionally biased toward basic and acidic residues: residues 27–50 (KAMEYHPDRNPDDPEAEQKFKEAS), 58–73 (DPEKRQRYDQFGHDGV), and 113–124 (GRSERGRGRPGS). Disordered regions lie at residues 27–86 (KAME…GRGR) and 99–125 (SDIFGGAPGGGRGRGRSERGRGRPGSD). The CR-type zinc finger occupies 140-225 (GTEKNLRLQK…CGGEGRVQGE (86 aa)). The Zn(2+) site is built by C153, C156, C173, C176, C199, C202, C213, and C216. CXXCXGXG motif repeat units follow at residues 153-160 (CESCDGTG), 173-180 (CPKCDGTG), 199-206 (CPRCEGEG), and 213-220 (CDDCGGEG). The segment covering 362–376 (AHDNFQPRPPEEDTQ) has biased composition (basic and acidic residues). The segment at 362–388 (AHDNFQPRPPEEDTQKSFFRRVSDVFS) is disordered.

The protein belongs to the DnaJ family. As to quaternary structure, homodimer. The cofactor is Zn(2+).

It localises to the cytoplasm. In terms of biological role, participates actively in the response to hyperosmotic and heat shock by preventing the aggregation of stress-denatured proteins and by disaggregating proteins, also in an autonomous, DnaK-independent fashion. Unfolded proteins bind initially to DnaJ; upon interaction with the DnaJ-bound protein, DnaK hydrolyzes its bound ATP, resulting in the formation of a stable complex. GrpE releases ADP from DnaK; ATP binding to DnaK triggers the release of the substrate protein, thus completing the reaction cycle. Several rounds of ATP-dependent interactions between DnaJ, DnaK and GrpE are required for fully efficient folding. Also involved, together with DnaK and GrpE, in the DNA replication of plasmids through activation of initiation proteins. This chain is Chaperone protein DnaJ, found in Salinibacter ruber (strain DSM 13855 / M31).